The primary structure comprises 133 residues: Fluoride-specific ion channel FluC 4 (133 aa).

Helical transmembrane passes span 7-27 (ILVL…SGYV), 37-57 (WGTF…AGLG), and 60-80 (LGGI…LLGG). Glycine 79 and threonine 82 together coordinate Na(+). A helical membrane pass occupies residues 107-127 (IVASALLCVLAVAAGYGGIMW).

The protein belongs to the fluoride channel Fluc/FEX (TC 1.A.43) family.

The protein localises to the cell inner membrane. The catalysed reaction is fluoride(in) = fluoride(out). With respect to regulation, na(+) is not transported, but it plays an essential structural role and its presence is essential for fluoride channel function. Fluoride-specific ion channel. Important for reducing fluoride concentration in the cell, thus reducing its toxicity. The protein is Fluoride-specific ion channel FluC 4 of Brucella abortus biovar 1 (strain 9-941).